A 336-amino-acid polypeptide reads, in one-letter code: Anthranilate phosphoribosyltransferase (336 aa).

Residues Gly-82, 85–86, Thr-90, 92–95, 110–118, and Ser-122 contribute to the 5-phospho-alpha-D-ribose 1-diphosphate site; these read GD, NIST, and KHGNRFASG. Anthranilate is bound at residue Gly-82. Ser-94 lines the Mg(2+) pocket. Residue Asn-113 coordinates anthranilate. Arg-168 is a binding site for anthranilate. 2 residues coordinate Mg(2+): Asp-227 and Glu-228.

The protein belongs to the anthranilate phosphoribosyltransferase family. As to quaternary structure, homodimer. Mg(2+) is required as a cofactor.

The catalysed reaction is N-(5-phospho-beta-D-ribosyl)anthranilate + diphosphate = 5-phospho-alpha-D-ribose 1-diphosphate + anthranilate. Its pathway is amino-acid biosynthesis; L-tryptophan biosynthesis; L-tryptophan from chorismate: step 2/5. In terms of biological role, catalyzes the transfer of the phosphoribosyl group of 5-phosphorylribose-1-pyrophosphate (PRPP) to anthranilate to yield N-(5'-phosphoribosyl)-anthranilate (PRA). In Desulfitobacterium hafniense (strain Y51), this protein is Anthranilate phosphoribosyltransferase.